The sequence spans 226 residues: Ribonuclease 3 (226 aa).

Residues 2-129 (IETISKTIKY…LIGAIYLDGG (128 aa)) enclose the RNase III domain. Glu-42 contributes to the Mg(2+) binding site. Asp-46 is a catalytic residue. The Mg(2+) site is built by Asn-115 and Glu-118. Glu-118 is a catalytic residue. Residues 154 to 223 (DAKTILQEFI…ASLMLNQIKD (70 aa)) form the DRBM domain.

Belongs to the ribonuclease III family. As to quaternary structure, homodimer. Mg(2+) serves as cofactor.

The protein localises to the cytoplasm. The catalysed reaction is Endonucleolytic cleavage to 5'-phosphomonoester.. Its function is as follows. Digests double-stranded RNA. Involved in the processing of primary rRNA transcript to yield the immediate precursors to the large and small rRNAs (23S and 16S). Processes some mRNAs, and tRNAs when they are encoded in the rRNA operon. Processes pre-crRNA and tracrRNA of type II CRISPR loci if present in the organism. This Ehrlichia canis (strain Jake) protein is Ribonuclease 3.